The chain runs to 171 residues: Lipoprotein signal peptidase (171 aa).

3 helical membrane passes run Ser-8–Val-28, Trp-64–Leu-84, and Ser-96–Val-118. Residues Asp-120 and Asp-138 contribute to the active site. The helical transmembrane segment at Val-133–Phe-153 threads the bilayer.

The protein belongs to the peptidase A8 family.

The protein resides in the cell inner membrane. It carries out the reaction Release of signal peptides from bacterial membrane prolipoproteins. Hydrolyzes -Xaa-Yaa-Zaa-|-(S,diacylglyceryl)Cys-, in which Xaa is hydrophobic (preferably Leu), and Yaa (Ala or Ser) and Zaa (Gly or Ala) have small, neutral side chains.. It participates in protein modification; lipoprotein biosynthesis (signal peptide cleavage). In terms of biological role, this protein specifically catalyzes the removal of signal peptides from prolipoproteins. In Haemophilus influenzae (strain 86-028NP), this protein is Lipoprotein signal peptidase.